The primary structure comprises 2885 residues: E3 ubiquitin-protein ligase hyd (2885 aa).

Positions 83–138 are disordered; that stretch reads SDAKCSTSGGSGTASASKAPSSSRPMARSRARLLRATGRSNSTGQGSGSRSTGVII. 2 stretches are compositionally biased toward low complexity: residues 95–108 and 116–138; these read TASA…SRPM and LRAT…GVII. Residues 154–196 form the UBA domain; that stretch reads YVPEELISQAEVVLQGKSRNLIIRELQRTNLDVNLAVNNLLSR. The span at 266 to 276 shows a compositional bias: low complexity; it reads ANANAADSNQS. Disordered stretches follow at residues 266 to 291, 580 to 664, and 711 to 731; these read ANAN…TGNS, NNLN…GRKD, and AATS…KEDD. 2 stretches are compositionally biased toward polar residues: residues 277–291 and 598–615; these read TTRS…TGNS and AMPS…SNSK. Residues Ser-628 and Ser-631 each carry the phosphoserine modification. Residues 650–664 are compositionally biased toward basic and acidic residues; that stretch reads TTKEDSNAPQEGRKD. Residues 711–722 show a composition bias toward low complexity; that stretch reads AATSSTSNTAST. Ser-967 bears the Phosphoserine mark. A compositionally biased stretch (low complexity) spans 1008 to 1032; that stretch reads ASSSNENSSFATMSSSAAGSASSTS. Positions 1008–1035 are disordered; sequence ASSSNENSSFATMSSSAAGSASSTSRDN. Residues 1217 to 1285 form a UBR-type zinc finger; the sequence is DTCSFTWTGA…EKCKCKALIA (69 aa). At Ser-1362 the chain carries Phosphoserine. The interval 1642 to 1761 is disordered; sequence NEDGMQDDES…IRSRDTARSS (120 aa). The span at 1669–1681 shows a compositional bias: polar residues; sequence NQSNQEVQRSVQA. The span at 1696 to 1721 shows a compositional bias: acidic residues; that stretch reads LEDESGDSSAQEEDGSEDGESDDQSD. Polar residues predominate over residues 1735–1749; it reads TNSNARSDLAPQTMQ. The residue at position 2037 (Ser-2037) is a Phosphoserine. The interval 2124 to 2143 is disordered; sequence IDSSKTGDGNVTNKAEGSTD. Ser-2183 is subject to Phosphoserine. The tract at residues 2473–2492 is disordered; sequence NLDARPYTPPNSSDNATPES. A compositionally biased stretch (polar residues) spans 2482–2492; sequence PNSSDNATPES. The PABC domain occupies 2484 to 2561; sequence SSDNATPESL…AIEIITFKQK (78 aa). Phosphoserine is present on Ser-2574. An HECT domain is found at 2782-2885; the sequence is FNDESSEGPD…AIKSKNFGFV (104 aa). Cys-2854 functions as the Glycyl thioester intermediate in the catalytic mechanism.

It belongs to the UBR5 family.

It localises to the nucleus. Its subcellular location is the cytoplasm. It catalyses the reaction S-ubiquitinyl-[E2 ubiquitin-conjugating enzyme]-L-cysteine + [acceptor protein]-L-lysine = [E2 ubiquitin-conjugating enzyme]-L-cysteine + N(6)-ubiquitinyl-[acceptor protein]-L-lysine.. The protein operates within protein modification; protein ubiquitination. Its function is as follows. E3 ubiquitin-protein ligase which accepts ubiquitin from an E2 ubiquitin-conjugating enzyme in the form of a thioester and then directly transfers the ubiquitin to targeted substrate. Required for regulation of cell proliferation in imaginal disks and germ cells. Acts as a negative regulator of hh, ci and dpp expression in the anterior of the eye disk. Acts as a positive regulator of the canonical Wnt signaling pathway by mediating ubiquitination and degradation of gro. Catalyzes 'Lys-63'-linked polyubiquitination of akirin, thereby activating the immune deficiency pathway (Imd). The chain is E3 ubiquitin-protein ligase hyd (hyd) from Drosophila melanogaster (Fruit fly).